Here is a 343-residue protein sequence, read N- to C-terminus: Heat-inducible transcription repressor HrcA (343 aa).

It belongs to the HrcA family.

Negative regulator of class I heat shock genes (grpE-dnaK-dnaJ and groELS operons). Prevents heat-shock induction of these operons. This is Heat-inducible transcription repressor HrcA from Bacillus pumilus (strain SAFR-032).